The chain runs to 245 residues: Biosynthetic peptidoglycan transglycosylase (245 aa).

A helical transmembrane segment spans residues 10-30 (FLALLFVVATLAQLWYLGQVL). A disordered region spans residues 224-245 (DPGTVPLPPPPEPTAPPEGNTQ). Positions 226–239 (GTVPLPPPPEPTAP) are enriched in pro residues.

The protein belongs to the glycosyltransferase 51 family.

It localises to the cell inner membrane. The catalysed reaction is [GlcNAc-(1-&gt;4)-Mur2Ac(oyl-L-Ala-gamma-D-Glu-L-Lys-D-Ala-D-Ala)](n)-di-trans,octa-cis-undecaprenyl diphosphate + beta-D-GlcNAc-(1-&gt;4)-Mur2Ac(oyl-L-Ala-gamma-D-Glu-L-Lys-D-Ala-D-Ala)-di-trans,octa-cis-undecaprenyl diphosphate = [GlcNAc-(1-&gt;4)-Mur2Ac(oyl-L-Ala-gamma-D-Glu-L-Lys-D-Ala-D-Ala)](n+1)-di-trans,octa-cis-undecaprenyl diphosphate + di-trans,octa-cis-undecaprenyl diphosphate + H(+). It participates in cell wall biogenesis; peptidoglycan biosynthesis. In terms of biological role, peptidoglycan polymerase that catalyzes glycan chain elongation from lipid-linked precursors. The chain is Biosynthetic peptidoglycan transglycosylase from Alcanivorax borkumensis (strain ATCC 700651 / DSM 11573 / NCIMB 13689 / SK2).